Reading from the N-terminus, the 225-residue chain is NAD(P)H-quinone oxidoreductase subunit K, chloroplastic (225 aa).

Residues C43, C44, C108, and C139 each coordinate [4Fe-4S] cluster.

Belongs to the complex I 20 kDa subunit family. NDH is composed of at least 16 different subunits, 5 of which are encoded in the nucleus. [4Fe-4S] cluster serves as cofactor.

Its subcellular location is the plastid. It localises to the chloroplast thylakoid membrane. It catalyses the reaction a plastoquinone + NADH + (n+1) H(+)(in) = a plastoquinol + NAD(+) + n H(+)(out). It carries out the reaction a plastoquinone + NADPH + (n+1) H(+)(in) = a plastoquinol + NADP(+) + n H(+)(out). Functionally, NDH shuttles electrons from NAD(P)H:plastoquinone, via FMN and iron-sulfur (Fe-S) centers, to quinones in the photosynthetic chain and possibly in a chloroplast respiratory chain. The immediate electron acceptor for the enzyme in this species is believed to be plastoquinone. Couples the redox reaction to proton translocation, and thus conserves the redox energy in a proton gradient. The protein is NAD(P)H-quinone oxidoreductase subunit K, chloroplastic of Arabis hirsuta (Hairy rock-cress).